The sequence spans 130 residues: Small ribosomal subunit protein uS9 (130 aa).

This sequence belongs to the universal ribosomal protein uS9 family.

The polypeptide is Small ribosomal subunit protein uS9 (Agathobacter rectalis (strain ATCC 33656 / DSM 3377 / JCM 17463 / KCTC 5835 / VPI 0990) (Eubacterium rectale)).